A 316-amino-acid polypeptide reads, in one-letter code: Beta-ketoacyl-[acyl-carrier-protein] synthase III (316 aa).

Active-site residues include cysteine 112 and histidine 243. Residues 244–248 (QANLR) are ACP-binding. Asparagine 273 is an active-site residue.

The protein belongs to the thiolase-like superfamily. FabH family. In terms of assembly, homodimer.

The protein localises to the cytoplasm. The catalysed reaction is malonyl-[ACP] + acetyl-CoA + H(+) = 3-oxobutanoyl-[ACP] + CO2 + CoA. The protein operates within lipid metabolism; fatty acid biosynthesis. Its function is as follows. Catalyzes the condensation reaction of fatty acid synthesis by the addition to an acyl acceptor of two carbons from malonyl-ACP. Catalyzes the first condensation reaction which initiates fatty acid synthesis and may therefore play a role in governing the total rate of fatty acid production. Possesses both acetoacetyl-ACP synthase and acetyl transacylase activities. Its substrate specificity determines the biosynthesis of branched-chain and/or straight-chain of fatty acids. The chain is Beta-ketoacyl-[acyl-carrier-protein] synthase III from Histophilus somni (strain 2336) (Haemophilus somnus).